The sequence spans 369 residues: Superinfection exclusion protein (369 aa).

Residues 1-15 (MIALLILSLTCSAST) form the signal peptide.

Belongs to the serpin family. Orthopoxvirus OPG040 subfamily. Interacts with A56 protein.

It is found in the virion membrane. Its subcellular location is the host cell membrane. Functionally, prevents cell to cell fusion via its interaction with A56 protein. The A56-K2 complex associates with components of the entry fusion complex (EFC) presumably to avoid superinfection and syncytium formation. This chain is Superinfection exclusion protein (OPG040), found in Vaccinia virus (strain Ankara) (VACV).